The chain runs to 160 residues: MNTDIKNLIWIDLEMTGLNPNIHKIIEIATLITDKNLKILSYGPVIAIYQNNHQLSFMDPWNNKMHTKNGLITRIKNSLYTEHLAEIKTITFLKKWVPKNTSPMCGNSISTDRQFLFKYMPTLEKYFHYRQIDVSTIKELALRWKPKIYNKLKKKTLIKH.

The region spanning 8–158 is the Exonuclease domain; the sequence is LIWIDLEMTG…YNKLKKKTLI (151 aa). Tyr-129 is an active-site residue.

The protein belongs to the oligoribonuclease family.

Its subcellular location is the cytoplasm. Functionally, 3'-to-5' exoribonuclease specific for small oligoribonucleotides. The protein is Oligoribonuclease (orn) of Buchnera aphidicola subsp. Baizongia pistaciae (strain Bp).